The sequence spans 713 residues: Serologically defined colon cancer antigen 8 (713 aa).

Ser-4 and Ser-28 each carry phosphoserine. A disordered region spans residues 84 to 103 (QADKESEVSPSRRRKMSPLR). Residues 129–175 (IHHLEAEVKFCKEELSGMKNKIQVVVLENEGLQQQLKSQRQEETLRE) adopt a coiled-coil conformation. The disordered stretch occupies residues 194 to 215 (EDSGVGETSKRPFSHDNADFGK). Residues 201–212 (TSKRPFSHDNAD) show a composition bias toward basic and acidic residues. The sufficient for homodimerization stretch occupies residues 216–713 (AASAGEQLEL…QLPSMPQSDC (498 aa)). 2 coiled-coil regions span residues 223–273 (LELE…LLAA) and 348–707 (EEAN…QLPS). A mediates interaction with OFD1 region spans residues 533–713 (HQLHLTRQEK…QLPSMPQSDC (181 aa)).

As to quaternary structure, homodimer. Interacts with OFD1; the interaction is direct. Interacts with FAM161A. Interacts with RABEP2, ERC1 and CEP131. As to expression, expressed in thymus, prostate, testis, ovary, small intestine, colon, mucosa, colon and renal cancer tumors.

It localises to the cytoplasm. The protein localises to the cytoskeleton. It is found in the microtubule organizing center. The protein resides in the centrosome. Its subcellular location is the centriole. It localises to the cilium basal body. The protein localises to the cell junction. In terms of biological role, plays a role in the establishment of cell polarity and epithelial lumen formation. Also plays an essential role in ciliogenesis and subsequent Hedgehog signaling pathway that requires the presence of intact primary cilia for pathway activation. Mechanistically, interacts with and mediates RABEP2 centrosomal localization which is critical for ciliogenesis. The chain is Serologically defined colon cancer antigen 8 (SDCCAG8) from Homo sapiens (Human).